A 554-amino-acid polypeptide reads, in one-letter code: MTAPGAAGRCPPTTWLGSLLLLVCLLASRSITEEVSEYCSHMIGSGHLQSLQRLIDSQMETSCQITFEFVDQEQLKDPVCYLKKAFLLVQDIMEDTMRFRDNTPNAIAIVQLQELSLRLKSCFTKDYEEHDKACVRTFYETPLQLLEKVKNVFNETKNLLDKDWNIFSKNCNNSFAECSSQDVVTKPDCNCLYPKAIPSSDPASVSPHQPLAPSMAPVAGLTWEDSEGTEGSSLLPGEQPLHTVDPGSAKQRPPRSTCQSFEPPETPVVKDSTIGGSPQPRPSVGAFNPGMEDILDSAMGTNWVPEEASGEASEIPVPQGTELSPSRPGGGSMQTEPARPSNFLSASSPLPASAKGQQPADVTGTALPRVGPVRPTGQDWNHTPQKTDHPSALLRDPPEPGSPRISSLRPQGLSNPSTLSAQPQLSRSHSSGSVLPLGELEGRRSTRDRRSPAEPEGGPASEGAARPLPRFNSVPLTDTGHERQSEGSFSPQLQESVFHLLVPSVILVLLAVGGLLFYRWRRRSHQEPQRADSPLEQPEGSPLTQDDRQVELPV.

Positions Met1–Thr32 are cleaved as a signal peptide. The Lumenal segment spans residues Glu33–Ser496. 3 disulfides stabilise this stretch: Cys39–Cys122, Cys80–Cys171, and Cys134–Cys178. 2 N-linked (GlcNAc...) asparagine glycosylation sites follow: Asn154 and Asn172. The segment at Glu224–Ser488 is disordered. The residue at position 266 (Thr266) is a Phosphothreonine; by FAM20C. An O-linked (Xyl...) (chondroitin sulfate) serine glycan is attached at Ser309. Positions Leu344–Ala354 are enriched in low complexity. Residues Thr363 and Thr365 are each glycosylated (O-linked (GalNAc...) threonine). A compositionally biased stretch (polar residues) spans Arg404–Ser433. Residues Ser406–Ser426 form an O-glycosylated at one site region. Residues Leu440 to Ala453 show a composition bias toward basic and acidic residues. The helical transmembrane segment at Val497–Phe517 threads the bilayer. At Tyr518 to Val554 the chain is on the cytoplasmic side. The interval Gln526–Val554 is disordered. The segment covering Gln545–Val554 has biased composition (basic and acidic residues).

In terms of assembly, homodimer or heterodimer; disulfide-linked. Likely to exist in multiple forms: homodimer consisting of 2 identical 150-200 kDa proteoglycan subunits, heterodimer consisting of a 150-200 kDa proteoglycan subunit and a truncated 43 kDa subunit, and homodimer consisting of 2 identical 43 kDa subunits. Interacts with CSF1R. In terms of processing, N-glycosylated. Post-translationally, O-glycosylated; contains chondroitin sulfate. O-glycosylated with core 1 or possibly core 8 glycans. O-glycosylated.

The protein localises to the cell membrane. Its subcellular location is the secreted. It localises to the extracellular space. In terms of biological role, cytokine that plays an essential role in the regulation of survival, proliferation and differentiation of hematopoietic precursor cells, especially mononuclear phagocytes, such as macrophages and monocytes. Promotes the release of pro-inflammatory chemokines, and thereby plays an important role in innate immunity and in inflammatory processes. Plays an important role in the regulation of osteoclast proliferation and differentiation, the regulation of bone resorption, and is required for normal bone development. Required for normal male and female fertility. Promotes reorganization of the actin cytoskeleton, regulates formation of membrane ruffles, cell adhesion and cell migration. Plays a role in lipoprotein clearance. This Homo sapiens (Human) protein is Macrophage colony-stimulating factor 1 (CSF1).